The sequence spans 418 residues: Putative ion-transport protein YfeO (418 aa).

Transmembrane regions (helical) follow at residues 10 to 30 (LLLS…LIVV), 54 to 74 (DSPF…GLVI), 99 to 119 (ALPG…SLGP), 120 to 140 (EHPI…RLLP), 149 to 169 (ILAS…AALI), 186 to 206 (LFAP…FFHP), 223 to 243 (ILSG…AVWC), 258 to 278 (VLML…AGPV), 300 to 320 (DYFL…ASGF), 322 to 342 (GGRI…LHEH), 343 to 363 (VPAV…VLVV), and 371 to 391 (LFMA…CIVM).

The protein belongs to the chloride channel (TC 2.A.49) family.

It localises to the cell membrane. The protein is Putative ion-transport protein YfeO of Escherichia coli O7:K1 (strain IAI39 / ExPEC).